The sequence spans 1565 residues: Major cell-surface adhesin PAc (1565 aa).

The first 38 residues, 1–38, serve as a signal peptide directing secretion; it reads MKVKKTYGFRKSKISKTLCGAVLGTVAAVSVAGQKVFA. Residues 42-54 show a composition bias toward low complexity; sequence TTTSDVDTKVVGT. Residues 42–81 form a disordered region; it reads TTTSDVDTKVVGTQTGNPATNLPEAQGSASKEAEQSQTKL. A compositionally biased stretch (basic and acidic residues) spans 72 to 81; the sequence is KEAEQSQTKL. Ag I/II A repeat units follow at residues 146 to 220, 221 to 302, 303 to 384, and 385 to 466; these read KKTT…QKTN, AANQ…QEAN, AANE…KKAN, and AANE…QKDL. Residues 203 to 448 are heptad repeats of Y-[EQ]-X-X-L-A-X; the sequence is EAKLAQYQAD…KRNADAKADY (246 aa). Positions 461 to 834 are V-region (lectin-like); that stretch reads KYQKDLADYP…VNVPKVTKEK (374 aa). Disordered regions lie at residues 827-985 and 1486-1511; these read VPKV…PTPP and NTVK…PRTS. One copy of the P1 repeat lies at 848 to 887; it reads TYETEKPLKPAPVAPNYEKEPTPPTRTPDQAEPNKPTPPT. Residues 888–926 form a P2 repeat; it reads YETEKPLEPAPVEPSYEAEPTPPTRTPDQAEPNKPTPPT. Residues 927-964 form a P3 repeat; sequence YETEKPLEPAPVEPSYEAEPTPPTPTPDQPEPNKPVEP. Over residues 946–961 the composition is skewed to pro residues; the sequence is PTPPTPTPDQPEPNKP. The LPXTG sorting signal motif lies at 1532-1536; that stretch reads LPNTG. A Pentaglycyl murein peptidoglycan amidated threonine modification is found at Thr1535. Residues 1536-1565 constitute a propeptide, removed by sortase; sequence GVTNNAYMPLLGIIGLVTSFSLLGLKAKKD.

The protein belongs to the antigen I/II family.

It localises to the secreted. The protein resides in the cell wall. In terms of biological role, surface protein antigen implicated in dental caries. In Streptococcus mutans, this protein is Major cell-surface adhesin PAc.